Here is a 115-residue protein sequence, read N- to C-terminus: Large ribosomal subunit protein bL19 (115 aa).

Belongs to the bacterial ribosomal protein bL19 family.

In terms of biological role, this protein is located at the 30S-50S ribosomal subunit interface and may play a role in the structure and function of the aminoacyl-tRNA binding site. The protein is Large ribosomal subunit protein bL19 of Francisella tularensis subsp. holarctica (strain FTNF002-00 / FTA).